We begin with the raw amino-acid sequence, 204 residues long: dITP/XTP pyrophosphatase (204 aa).

8–13 (SRNRKK) contributes to the substrate binding site. Catalysis depends on D73, which acts as the Proton acceptor. D73 serves as a coordination point for Mg(2+). Substrate is bound by residues S74, 155 to 158 (FGYD), K179, and 184 to 185 (HR).

This sequence belongs to the HAM1 NTPase family. Homodimer. Mg(2+) serves as cofactor.

It carries out the reaction XTP + H2O = XMP + diphosphate + H(+). The enzyme catalyses dITP + H2O = dIMP + diphosphate + H(+). It catalyses the reaction ITP + H2O = IMP + diphosphate + H(+). In terms of biological role, pyrophosphatase that catalyzes the hydrolysis of nucleoside triphosphates to their monophosphate derivatives, with a high preference for the non-canonical purine nucleotides XTP (xanthosine triphosphate), dITP (deoxyinosine triphosphate) and ITP. Seems to function as a house-cleaning enzyme that removes non-canonical purine nucleotides from the nucleotide pool, thus preventing their incorporation into DNA/RNA and avoiding chromosomal lesions. This Mycolicibacterium paratuberculosis (strain ATCC BAA-968 / K-10) (Mycobacterium paratuberculosis) protein is dITP/XTP pyrophosphatase.